The primary structure comprises 668 residues: DNA ligase (668 aa).

Residues D34–D38, S83–L84, and E114 each bind NAD(+). Residue K116 is the N6-AMP-lysine intermediate of the active site. R137, E171, K286, and K310 together coordinate NAD(+). Residues C404, C407, C422, and C427 each coordinate Zn(2+). One can recognise a BRCT domain in the interval N588–G668.

Belongs to the NAD-dependent DNA ligase family. LigA subfamily. Mg(2+) is required as a cofactor. The cofactor is Mn(2+).

It carries out the reaction NAD(+) + (deoxyribonucleotide)n-3'-hydroxyl + 5'-phospho-(deoxyribonucleotide)m = (deoxyribonucleotide)n+m + AMP + beta-nicotinamide D-nucleotide.. Functionally, DNA ligase that catalyzes the formation of phosphodiester linkages between 5'-phosphoryl and 3'-hydroxyl groups in double-stranded DNA using NAD as a coenzyme and as the energy source for the reaction. It is essential for DNA replication and repair of damaged DNA. The sequence is that of DNA ligase from Mycoplasma mycoides subsp. mycoides SC (strain CCUG 32753 / NCTC 10114 / PG1).